Here is an 836-residue protein sequence, read N- to C-terminus: Neuroligin-2 (836 aa).

An N-terminal signal peptide occupies residues 1 to 14; sequence MWLLALCLVGLAGA. Over 15-678 the chain is Extracellular; that stretch reads QRGGGGPGGG…DSRDYSTELS (664 aa). N98 and N136 each carry an N-linked (GlcNAc...) asparagine glycan. 3 disulfides stabilise this stretch: C106-C141, C317-C328, and C487-C521. N522 carries an N-linked (GlcNAc...) asparagine glycan. Residues 623-661 form a disordered region; sequence PPYATRWPPRTPGPGTSGTRRPPPPATLPPESDIDLGPR. Residues 679–699 form a helical membrane-spanning segment; it reads VTVAVGASLLFLNILAFAALY. Positions 679 to 699 are required for interaction with LHFPL4; it reads VTVAVGASLLFLNILAFAALY. The Cytoplasmic portion of the chain corresponds to 700–836; it reads YKRDRRQELR…LPHPHSTTRV (137 aa). 2 disordered regions span residues 711 to 735 and 791 to 836; these read RRLS…TAGR and LLPS…TTRV. Phosphoserine occurs at positions 714 and 719. Gly residues predominate over residues 717–728; it reads GGSGSGVPGGGP. Positions 796-819 are enriched in pro residues; sequence LGPPPPPPPPSLHPFGPFPPPPPT. Positions 824–836 are enriched in polar residues; sequence NNTLPHPHSTTRV.

Belongs to the type-B carboxylesterase/lipase family. As to quaternary structure, interacts with neurexins NRXN1, NRXN2 and NRXN3. Interaction with neurexins is mediated by heparan sulfate glycan modification on neurexin. Interacts (via its C-terminus) with DLG4/PSD-95 (via PDZ domain 3). Interacts with PATJ. Interacts with MDGA2. Interacts with GPHN. Interacts with MDGA1. Found in a complex with MAGI2 and IGSF9B, where it interacts with MAGI2 (via WW 1, WW 2 and PDZ 2 domains). Identified in a complex of 720 kDa composed of LHFPL4, NLGN2, GABRA1, GABRB2, GABRG2 and GABRB3. Interacts with LHFPL4; leading to mutual regulation of the protein level and synaptic clustering. Interacts with GABRA1. As to expression, brain and arteries. Detected in the retina outer plexiform layer (at protein level). Widely expressed. Detected in heart, brain, spleen, lung, liver, skeletal muscle, kidney and testis.

Its subcellular location is the cell membrane. The protein resides in the postsynaptic cell membrane. It is found in the presynaptic cell membrane. Transmembrane scaffolding protein involved in cell-cell interactions via its interactions with neurexin family members. Mediates cell-cell interactions both in neurons and in other types of cells, such as Langerhans beta cells. Mediates cell-cell interactions between Langerhans beta cells and modulates insulin secretion. Plays a role in synapse function and synaptic signal transmission, especially via gamma-aminobutyric acid receptors (GABA(A) receptors). Functions by recruiting and clustering synaptic proteins. Promotes clustering of postsynaptic GABRG2 and GPHN. Promotes clustering of postsynaptic LHFPL4. Modulates signaling by inhibitory synapses, and thereby plays a role in controlling the ratio of signaling by excitatory and inhibitory synapses and information processing. Required for normal signal amplitude from inhibitory synapses, but is not essential for normal signal frequency. May promote the initial formation of synapses, but is not essential for this. In vitro, triggers the de novo formation of presynaptic structures. The protein is Neuroligin-2 (Nlgn2) of Mus musculus (Mouse).